A 344-amino-acid chain; its full sequence is Putative esterase NocK (344 aa).

The segment at residues Met-1 to Ala-34 is a signal peptide (tat-type signal). A disordered region spans residues Gly-265–Asp-295. Basic and acidic residues predominate over residues Gly-266–Arg-276.

Belongs to the AB hydrolase superfamily. Post-translationally, predicted to be exported by the Tat system. The position of the signal peptide cleavage has not been experimentally proven.

The polypeptide is Putative esterase NocK (Nocardia uniformis subsp. tsuyamanensis).